A 176-amino-acid chain; its full sequence is Protein singles bar (176 aa).

Helical transmembrane passes span 13–35 (LGIR…LSRI), 71–91 (FLAT…CYAF), 111–131 (LASC…VVWL), and 140–160 (GFWA…AGIL). Residues 30–173 (FVLSRIGLLK…DAYLAFRHFR (144 aa)) enclose the MARVEL domain.

It is found in the membrane. Its function is as follows. Essential for myoblast fusion in developing embryos and pupae, and consequently is essential for muscle formation in adults. Required for progression past the pre-fusion complex stage of myoblast fusion. This Drosophila melanogaster (Fruit fly) protein is Protein singles bar.